Consider the following 126-residue polypeptide: Ribonuclease P protein component (126 aa).

The protein belongs to the RnpA family. Consists of a catalytic RNA component (M1 or rnpB) and a protein subunit.

It carries out the reaction Endonucleolytic cleavage of RNA, removing 5'-extranucleotides from tRNA precursor.. RNaseP catalyzes the removal of the 5'-leader sequence from pre-tRNA to produce the mature 5'-terminus. It can also cleave other RNA substrates such as 4.5S RNA. The protein component plays an auxiliary but essential role in vivo by binding to the 5'-leader sequence and broadening the substrate specificity of the ribozyme. The chain is Ribonuclease P protein component from Synechococcus sp. (strain JA-3-3Ab) (Cyanobacteria bacterium Yellowstone A-Prime).